A 314-amino-acid chain; its full sequence is ATP synthase gamma chain (314 aa).

The protein belongs to the ATPase gamma chain family. As to quaternary structure, F-type ATPases have 2 components, CF(1) - the catalytic core - and CF(0) - the membrane proton channel. CF(1) has five subunits: alpha(3), beta(3), gamma(1), delta(1), epsilon(1). CF(0) has three main subunits: a, b and c.

It localises to the cellular thylakoid membrane. Produces ATP from ADP in the presence of a proton gradient across the membrane. The gamma chain is believed to be important in regulating ATPase activity and the flow of protons through the CF(0) complex. This chain is ATP synthase gamma chain, found in Crocosphaera subtropica (strain ATCC 51142 / BH68) (Cyanothece sp. (strain ATCC 51142)).